Here is a 317-residue protein sequence, read N- to C-terminus: Glutamyl-tRNA reductase-binding protein, chloroplastic (317 aa).

The N-terminal 42 residues, 1-42, are a transit peptide targeting the chloroplast; sequence MQLQTQSFALNLLPSPNFAKPIERREFISLKRDPSRPISLRC.

In terms of assembly, interacts with HEMA1 and forms a heterotetramer of two GLUTRBP and two HEMA1 subunits.

The protein localises to the plastid. It is found in the chloroplast stroma. Involved in the regulation of glutamyl-tRNA reductase (GluTR) which is important for the synthesis and distribution of 5-aminolevulinate, a precursor in heme and chlorophyll biosynthesis. Stimulates GluTR activity and regulates glutamate-1-semialdehyde release. May play a role in heme metabolism. Necessary for efficient photosynthetic electron transport in chloroplasts. The polypeptide is Glutamyl-tRNA reductase-binding protein, chloroplastic (Arabidopsis thaliana (Mouse-ear cress)).